We begin with the raw amino-acid sequence, 878 residues long: NUT family member 2B (878 aa).

Disordered stretches follow at residues 273 to 324 (WSQG…DDSC), 417 to 512 (QKSQ…PEEI), 527 to 560 (LLGP…PPDP), 624 to 693 (PPLK…GMAR), 709 to 757 (LRAA…EEEE), and 775 to 878 (WLPQ…HCSQ). 2 stretches are compositionally biased toward pro residues: residues 278-288 (PLPPPPPPAAQ) and 427-444 (CLPP…PPAP). Over residues 476-487 (TKARRPPPRPHR) the composition is skewed to basic residues. A compositionally biased stretch (basic and acidic residues) spans 537–551 (EPEKQREEGKVKQPQ).

The protein belongs to the NUT family.

The polypeptide is NUT family member 2B (NUTM2B) (Homo sapiens (Human)).